A 308-amino-acid polypeptide reads, in one-letter code: tRNA dimethylallyltransferase (308 aa).

8–15 (GATAVGKT) is a binding site for ATP. Residue 10–15 (TAVGKT) coordinates substrate. The interval 33 to 36 (DSRQ) is interaction with substrate tRNA.

The protein belongs to the IPP transferase family. As to quaternary structure, monomer. Mg(2+) serves as cofactor.

It catalyses the reaction adenosine(37) in tRNA + dimethylallyl diphosphate = N(6)-dimethylallyladenosine(37) in tRNA + diphosphate. Catalyzes the transfer of a dimethylallyl group onto the adenine at position 37 in tRNAs that read codons beginning with uridine, leading to the formation of N6-(dimethylallyl)adenosine (i(6)A). The protein is tRNA dimethylallyltransferase of Kosmotoga olearia (strain ATCC BAA-1733 / DSM 21960 / TBF 19.5.1).